The following is a 444-amino-acid chain: Viral protein kinase (444 aa).

Residues 1–25 (MRWKRMERRPPLTPLRRSRTQSSGG) are disordered. ATP-binding positions include 90–98 (LGRGAFGII) and lysine 108. Aspartate 201 acts as the Proton acceptor in catalysis.

As to quaternary structure, interacts with protein K-bZIP/K8. Interacts with host beta-catenin/CTNNB1. Post-translationally, AUtophosphorylated.

The protein localises to the host nucleus. It carries out the reaction L-seryl-[protein] + ATP = O-phospho-L-seryl-[protein] + ADP + H(+). The enzyme catalyses L-threonyl-[protein] + ATP = O-phospho-L-threonyl-[protein] + ADP + H(+). In terms of biological role, serine/threonine protein kinase that plays a role in viral gene expression, viral DNA replication and encapsidation, and nuclear egress of virions. Regulates host transcriptional activity through interactions with RNA helicase and c-Jun N-terminal kinase (JNK) and viral transcriptional activity through interactions with the viral protein K-bZIP/K8. Induces host chromosome condensation and phosphorylation of histone H3. Phosphorylates the DNA polymerase processivity factor hence modulating its processivity function. Inhibits the host Wnt signaling pathway via direct interactions with beta-catenin/CTNNB1 while the kinase activity of vPK is not required for this inhibitory activity. Also phosphorylates host SAMHD1 and thereby counteracts its antiviral effect by reducing its dNTP hydrolase activity. This chain is Viral protein kinase (vPK), found in Human herpesvirus 8 type P (isolate GK18) (HHV-8).